We begin with the raw amino-acid sequence, 148 residues long: Large ribosomal subunit protein bL9 (148 aa).

Belongs to the bacterial ribosomal protein bL9 family.

In terms of biological role, binds to the 23S rRNA. This is Large ribosomal subunit protein bL9 from Staphylococcus epidermidis (strain ATCC 35984 / DSM 28319 / BCRC 17069 / CCUG 31568 / BM 3577 / RP62A).